Consider the following 326-residue polypeptide: MKSIAIIGASGYTGAQITSLIDADKNLVIQGLYVSENSVDKGKPLSELYPTYSHISLPLSPLSDEAKALIAEQADGVVLATDHAVSLHLAAWFFEQGLTVFDLSGAYRFSDKSQYPQWYGFEHDYPQVLSHAVYGLAEWNGADIADSKMIAVPGCYPTASLTALKPIHSLMTSSLPVINAVSGVTGAGRKAQLNTSFCEVSLTPYGVLGHRHQPEIATQLGQEVIFTPHLGNFKRGILATITVQLKEGVTQADIEQAYAIYDNAPLVTVKQNQFPKVDDVTNTPNCHLGWKFDPKTGYLVVASAIDNLMKGAASQAHQCIKIHFKY.

Cys-155 is an active-site residue.

The protein belongs to the NAGSA dehydrogenase family. Type 1 subfamily.

Its subcellular location is the cytoplasm. It carries out the reaction N-acetyl-L-glutamate 5-semialdehyde + phosphate + NADP(+) = N-acetyl-L-glutamyl 5-phosphate + NADPH + H(+). Its pathway is amino-acid biosynthesis; L-arginine biosynthesis; N(2)-acetyl-L-ornithine from L-glutamate: step 3/4. Functionally, catalyzes the NADPH-dependent reduction of N-acetyl-5-glutamyl phosphate to yield N-acetyl-L-glutamate 5-semialdehyde. In Shewanella woodyi (strain ATCC 51908 / MS32), this protein is N-acetyl-gamma-glutamyl-phosphate reductase.